Consider the following 126-residue polypeptide: Acidic phospholipase A2 4 (126 aa).

Residue Ser-1 is a signal peptide. A propeptide spanning residues 2 to 7 (NRPMPL) is cleaved from the precursor. Cystine bridges form between Cys-18–Cys-78, Cys-33–Cys-125, Cys-35–Cys-51, Cys-50–Cys-106, Cys-57–Cys-99, Cys-67–Cys-92, and Cys-85–Cys-97. Positions 34, 36, and 38 each coordinate Ca(2+). His-54 is an active-site residue. Asp-55 serves as a coordination point for Ca(2+). Residue Asp-100 is part of the active site.

The protein belongs to the phospholipase A2 family. Group I subfamily. D49 sub-subfamily. Monomer. The cofactor is Ca(2+). In terms of tissue distribution, expressed by the venom gland.

The protein resides in the secreted. The catalysed reaction is a 1,2-diacyl-sn-glycero-3-phosphocholine + H2O = a 1-acyl-sn-glycero-3-phosphocholine + a fatty acid + H(+). Snake venom phospholipase A2 (PLA2) that exhibits strong anticoagulant activity, which is not due to the catalytic activity. PLA2 catalyzes the calcium-dependent hydrolysis of the 2-acyl groups in 3-sn-phosphoglycerides. The polypeptide is Acidic phospholipase A2 4 (Naja sagittifera (Andaman cobra)).